A 1113-amino-acid polypeptide reads, in one-letter code: Poly(A) RNA polymerase gld-2 (1113 aa).

Disordered regions lie at residues 1–113, 134–175, 205–266, and 445–513; these read MVMA…PKYH, RPIF…PTQP, LYRS…GQDP, and LDDE…DEST. Low complexity predominate over residues 22–52; that stretch reads SPSVDSVSRVQQQSGGFAFYNQQSNHQYQQS. Residues 60-106 are compositionally biased toward polar residues; the sequence is SRDGNTGYYNNHSGNKRQTYNNQRGGRSYNHRGNSNYQQNGEYSGNQ. Residues 149 to 172 show a composition bias toward low complexity; sequence RRSSPPSPSALSSSTANSTSNRAP. Residues 223 to 233 are compositionally biased toward pro residues; the sequence is YKQPPPQPPST. The span at 451–485 shows a compositional bias: basic and acidic residues; that stretch reads GADHDKTIDENRRRIHKSQEPRIGTEEKALNELPR. The segment covering 492–507 has biased composition (low complexity); the sequence is SSCSSISSVSESSSPS. The Mg(2+) site is built by D606 and D608. The 37-residue stretch at 780 to 816 folds into the PAP-associated domain; the sequence is TLGELLIGFLDYYANEFNYDRDAISIRQGRRVERAAL. Disordered regions lie at residues 817–854 and 966–1113; these read AVRPKIHSNSEGDKETPPPSSSASTSSIHNGGTPGIPM and GPGH…NVSQ. A compositionally biased stretch (polar residues) spans 972-994; that stretch reads YQQQSNQNLSRPQRPGSNQGYQM. Low complexity-rich tracts occupy residues 995–1035 and 1044–1061; these read NNNR…SRSN and QQNSQKGSSGVSVSKENV. A compositionally biased stretch (basic and acidic residues) spans 1069–1084; the sequence is VDKKQQNSNRKDDGNR.

The protein belongs to the DNA polymerase type-B-like family. GLD2 subfamily. In terms of assembly, interacts with gld-3. The cofactor is Mg(2+). It depends on Mn(2+) as a cofactor. Germline-specific.

It localises to the cytoplasm. The catalysed reaction is RNA(n) + ATP = RNA(n)-3'-adenine ribonucleotide + diphosphate. Its function is as follows. Cytoplasmic poly(A) RNA polymerase that adds successive AMP monomers to the 3'-end of specific RNAs, forming a poly(A) tail. Acts as a regulator of mitosis/meiosis required for progression through meiotic prophase during oogenesis and spermatogenesis and for promotion of the entry into meiosis from the mitotic cell cycle. May act by regulating and activating gld-1 mRNA activity in germline. Required for polyadenylation of neg-1 mRNA during embryogenesis. This chain is Poly(A) RNA polymerase gld-2 (gld-2), found in Caenorhabditis elegans.